A 316-amino-acid chain; its full sequence is MKISEVLEFKVEGEEERLDKFLARAYPDFSRSYIKKLVKEGLVYVNGEEVRKPSRKLREGERVILHVPEPEPLDVKPENIPINIIYEDEDIAVVEKPCGLVVHPSPGYTSGTLVNALLYHIKDLSSIGGVERPGIVHRLDKETAGVMVIAKNNTAHRNLVRQFQERKTEKFYKVLVKGLVKKDYGAIDTPIARHPVDRKRFWVRKEGKEALTEYWVLKRYEKYEITLLKVKIHTGRTHQIRVHFASIGHPVLGDRTYGFKSSSVPKELLSLMGECNMLIAYHLGFYHPTKGEWMVFEIEEPETFKSVYSWLEEHSP.

The 74-residue stretch at 16–89 (ERLDKFLARA…IPINIIYEDE (74 aa)) folds into the S4 RNA-binding domain. D140 is an active-site residue.

The protein belongs to the pseudouridine synthase RluA family.

The enzyme catalyses a uridine in RNA = a pseudouridine in RNA. This is an uncharacterized protein from Aquifex aeolicus (strain VF5).